The chain runs to 279 residues: MATH domain and coiled-coil domain-containing protein At1g31390 (279 aa).

The 129-residue stretch at 6-134 (EKKITWTIKN…NGDVKIVVEV (129 aa)) folds into the MATH domain. Positions 235–271 (KLDWLEKKLKEVCEARVQEIDEEWKDLTDLKENWSSD) form a coiled coil.

The polypeptide is MATH domain and coiled-coil domain-containing protein At1g31390 (Arabidopsis thaliana (Mouse-ear cress)).